The primary structure comprises 349 residues: Fructose-1,6-bisphosphatase class 1 (349 aa).

Positions 92, 113, 115, and 116 each coordinate Mg(2+). Substrate contacts are provided by residues 116-119, Asn-209, Tyr-242, and Lys-272; that span reads DGSS. Glu-278 provides a ligand contact to Mg(2+).

It belongs to the FBPase class 1 family. In terms of assembly, homotetramer. It depends on Mg(2+) as a cofactor.

The protein localises to the cytoplasm. The catalysed reaction is beta-D-fructose 1,6-bisphosphate + H2O = beta-D-fructose 6-phosphate + phosphate. The protein operates within carbohydrate biosynthesis; Calvin cycle. The chain is Fructose-1,6-bisphosphatase class 1 from Chloroherpeton thalassium (strain ATCC 35110 / GB-78).